The sequence spans 427 residues: Dihydrofolate synthetase (427 aa).

Residue 34–37 coordinates ATP; that stretch reads GKGS. Residues Glu123 and His153 each coordinate Mg(2+). ATP-binding residues include Arg275 and Asp296.

It belongs to the folylpolyglutamate synthase family.

The protein localises to the cytoplasm. The catalysed reaction is 7,8-dihydropteroate + L-glutamate + ATP = 7,8-dihydrofolate + ADP + phosphate + H(+). It functions in the pathway cofactor biosynthesis; tetrahydrofolylpolyglutamate biosynthesis. Glutamate-adding enzyme which catalyzes the binding of the first glutamyl side chain to dihydropteroate. Leads to the de nove synthesis of tetrahydrofolate. The polypeptide is Dihydrofolate synthetase (FOL3) (Saccharomyces cerevisiae (strain ATCC 204508 / S288c) (Baker's yeast)).